Reading from the N-terminus, the 61-residue chain is Small ribosomal subunit protein uS14 (61 aa).

Zn(2+) contacts are provided by Cys-24, Cys-27, Cys-40, and Cys-43.

Belongs to the universal ribosomal protein uS14 family. Zinc-binding uS14 subfamily. Part of the 30S ribosomal subunit. Contacts proteins S3 and S10. Requires Zn(2+) as cofactor.

Its function is as follows. Binds 16S rRNA, required for the assembly of 30S particles and may also be responsible for determining the conformation of the 16S rRNA at the A site. The protein is Small ribosomal subunit protein uS14 of Streptococcus pyogenes serotype M49 (strain NZ131).